The sequence spans 375 residues: V-type proton ATPase subunit C (375 aa).

The protein belongs to the V-ATPase C subunit family. V-ATPase is a heteromultimeric enzyme composed of a peripheral catalytic V1 complex (components A to H) attached to an integral membrane V0 proton pore complex (components: a, c, c'', d and e). Post-translationally, phosphorylated on Ser/Thr residues by WNK8.

It localises to the vacuole membrane. Subunit of the peripheral V1 complex of vacuolar ATPase. Subunit C is necessary for the assembly of the catalytic sector of the enzyme and is likely to have a specific function in its catalytic activity. V-ATPase is responsible for acidifying a variety of intracellular compartments in eukaryotic cells. In Arabidopsis thaliana (Mouse-ear cress), this protein is V-type proton ATPase subunit C (VHA-C).